The primary structure comprises 241 residues: Golgi-associated RAB2 interactor protein 6 (241 aa).

This sequence belongs to the GARIN family.

In Homo sapiens (Human), this protein is Golgi-associated RAB2 interactor protein 6.